A 323-amino-acid polypeptide reads, in one-letter code: tRNA U34 carboxymethyltransferase (323 aa).

Carboxy-S-adenosyl-L-methionine contacts are provided by residues K91, W105, K110, G130, 152–154 (DPT), 181–182 (IE), M196, Y200, and R315.

It belongs to the class I-like SAM-binding methyltransferase superfamily. CmoB family. As to quaternary structure, homotetramer.

The catalysed reaction is carboxy-S-adenosyl-L-methionine + 5-hydroxyuridine(34) in tRNA = 5-carboxymethoxyuridine(34) in tRNA + S-adenosyl-L-homocysteine + H(+). In terms of biological role, catalyzes carboxymethyl transfer from carboxy-S-adenosyl-L-methionine (Cx-SAM) to 5-hydroxyuridine (ho5U) to form 5-carboxymethoxyuridine (cmo5U) at position 34 in tRNAs. In Escherichia coli (strain SE11), this protein is tRNA U34 carboxymethyltransferase.